A 447-amino-acid chain; its full sequence is Kynurenine 3-monooxygenase (447 aa).

This sequence belongs to the aromatic-ring hydroxylase family. KMO subfamily. The cofactor is FAD.

It catalyses the reaction L-kynurenine + NADPH + O2 + H(+) = 3-hydroxy-L-kynurenine + NADP(+) + H2O. It participates in cofactor biosynthesis; NAD(+) biosynthesis; quinolinate from L-kynurenine: step 1/3. Catalyzes the hydroxylation of L-kynurenine (L-Kyn) to form 3-hydroxy-L-kynurenine (L-3OHKyn). Required for synthesis of quinolinic acid. The chain is Kynurenine 3-monooxygenase from Christiangramia forsetii (strain DSM 17595 / CGMCC 1.15422 / KT0803) (Gramella forsetii).